Consider the following 208-residue polypeptide: Small ribosomal subunit protein uS4 (208 aa).

An S4 RNA-binding domain is found at 95–157 (RRIDNVVYRA…DSLKKLIRSN (63 aa)).

This sequence belongs to the universal ribosomal protein uS4 family. In terms of assembly, part of the 30S ribosomal subunit. Contacts protein S5. The interaction surface between S4 and S5 is involved in control of translational fidelity.

Functionally, one of the primary rRNA binding proteins, it binds directly to 16S rRNA where it nucleates assembly of the body of the 30S subunit. In terms of biological role, with S5 and S12 plays an important role in translational accuracy. In Borreliella burgdorferi (strain ATCC 35210 / DSM 4680 / CIP 102532 / B31) (Borrelia burgdorferi), this protein is Small ribosomal subunit protein uS4.